The chain runs to 438 residues: Choline monooxygenase, chloroplastic (438 aa).

Residues 1 to 58 (MAASATTMLLKYPTTVCGIPNSSANNSTDPSNNIVQIPQTTTTNSPLLKFRTPNKPVN) constitute a chloroplast transit peptide. The Rieske domain maps to 121 to 228 (WQVAGYSDQV…VAVWGPFILI (108 aa)). Positions 163, 165, 182, and 185 each coordinate [2Fe-2S] cluster. Residues H288 and H293 each contribute to the Fe cation site.

This sequence belongs to the choline monooxygenase family. It depends on [2Fe-2S] cluster as a cofactor. Fe cation serves as cofactor. The cofactor is Mg(2+). In terms of tissue distribution, expressed in roots and leaves.

The protein localises to the plastid. The protein resides in the chloroplast stroma. It carries out the reaction choline + 2 reduced [2Fe-2S]-[ferredoxin] + O2 + 2 H(+) = betaine aldehyde hydrate + 2 oxidized [2Fe-2S]-[ferredoxin] + H2O. It functions in the pathway amine and polyamine biosynthesis; betaine biosynthesis via choline pathway; betaine aldehyde from choline (monooxygenase route): step 1/1. Catalyzes the first step of the osmoprotectant glycine betaine synthesis. The protein is Choline monooxygenase, chloroplastic (CMO) of Atriplex hortensis (Mountain spinach).